A 293-amino-acid chain; its full sequence is N(1)-aminopropylagmatine ureohydrolase (293 aa).

The Mn(2+) site is built by histidine 105, aspartate 128, histidine 130, aspartate 132, aspartate 210, and aspartate 212.

This sequence belongs to the arginase family. The cofactor is Mn(2+).

The enzyme catalyses N(1)-(3-aminopropyl)agmatine + H2O = urea + spermidine. It functions in the pathway amine and polyamine biosynthesis; spermidine biosynthesis. Involved in the biosynthesis of polyamines which are thought to support the growth of thermophilic microorganisms under high-temperature conditions. It seems that long-chain and branched-chain of polyamines effectively stabilize DNA and RNA, respectively. Catalyzes the decarboxylation of N1-(3-aminopropyl)agmatine to yield spermidine and urea. Does not act on agmatine. This chain is N(1)-aminopropylagmatine ureohydrolase, found in Thermus thermophilus (strain ATCC BAA-163 / DSM 7039 / HB27).